The primary structure comprises 424 residues: MACTLADSLLLFKGSYQKPVLRRDIAARYSPGIFSLNSNGLIQKRFRRQRNFVTRNKVTVIHAVAIPVQPAPVESAEYRKQLAEDYGFRQVGEPLSDDVTLKDVINPLPKEVFEIDDVKAWKSVLISVTSYALGLFMISKAPWYLLPLAWVWTGTAITGFFVIGHDCAHRSFSSNKLVEDIVGTLAFMPLIYPYEPWRFKHDRHHAKTNMLREDTAWHPVWKDEFESTPLLRKAIIYGYGPFRCWMSIAHWLMWHFDLKKFRPSEVPRVKISLACVFAFIAIGWPLIIYKTGIMGWIKFWLMPWLGYHFWMSTFTMVHHTAPYIPFKYSEEWNRAQAQLNGTVHCDYPKWIEILCHDINVHIPHHISPRIPSYNLRAAHKSLQENWGQYLNEASWNWRLMKTIMTVCQVYDKEKSLCCLRRTCP.

A chloroplast-targeting transit peptide spans 1 to 63 (MACTLADSLL…TRNKVTVIHA (63 aa)). Valine 64 is modified (N-acetylvaline). The Histidine box-1 signature appears at 165–169 (HDCAH). A Histidine box-2 motif is present at residues 201 to 205 (HDRHH). The Histidine box-3 motif lies at 361 to 365 (HIPHH).

This sequence belongs to the fatty acid desaturase type 1 family.

Its subcellular location is the plastid. It is found in the chloroplast membrane. It carries out the reaction a (9Z)-octadecenoyl-containing glycerolipid + 2 reduced [2Fe-2S]-[ferredoxin] + O2 + 2 H(+) = a (9Z,12Z)-octadecadienoyl-containing glycerolipid + 2 oxidized [2Fe-2S]-[ferredoxin] + 2 H2O. Its pathway is lipid metabolism; polyunsaturated fatty acid biosynthesis. Its function is as follows. Chloroplast omega-6 fatty acid desaturase introduces the second double bond in the biosynthesis of 16:3 and 18:3 fatty acids, important constituents of plant membranes. It is thought to use ferredoxin as an electron donor and to act on fatty acids esterified to galactolipids, sulfolipids and phosphatidylglycerol. The polypeptide is Omega-6 fatty acid desaturase, chloroplastic (Glycine max (Soybean)).